A 506-amino-acid chain; its full sequence is ATP synthase subunit alpha, chloroplastic (506 aa).

Glycine 170–threonine 177 is an ATP binding site. Threonine 257 is modified (phosphothreonine).

Belongs to the ATPase alpha/beta chains family. F-type ATPases have 2 components, CF(1) - the catalytic core - and CF(0) - the membrane proton channel. CF(1) has five subunits: alpha(3), beta(3), gamma(1), delta(1), epsilon(1). CF(0) has four main subunits: a, b, b' and c.

It is found in the plastid. The protein resides in the chloroplast thylakoid membrane. It carries out the reaction ATP + H2O + 4 H(+)(in) = ADP + phosphate + 5 H(+)(out). Functionally, produces ATP from ADP in the presence of a proton gradient across the membrane. The alpha chain is a regulatory subunit. This chain is ATP synthase subunit alpha, chloroplastic, found in Olimarabidopsis pumila (Dwarf rocket).